The primary structure comprises 96 residues: Co-chaperonin GroES (96 aa).

This sequence belongs to the GroES chaperonin family. In terms of assembly, heptamer of 7 subunits arranged in a ring. Interacts with the chaperonin GroEL.

It localises to the cytoplasm. In terms of biological role, together with the chaperonin GroEL, plays an essential role in assisting protein folding. The GroEL-GroES system forms a nano-cage that allows encapsulation of the non-native substrate proteins and provides a physical environment optimized to promote and accelerate protein folding. GroES binds to the apical surface of the GroEL ring, thereby capping the opening of the GroEL channel. The sequence is that of Co-chaperonin GroES from Neisseria meningitidis serogroup B (strain ATCC BAA-335 / MC58).